Reading from the N-terminus, the 827-residue chain is Endoribonuclease YSH1 (827 aa).

Zn(2+)-binding residues include His-96, His-98, Asp-100, His-101, His-184, and Asp-205. Residue His-426 is the Proton donor of the active site. His-448 serves as a coordination point for Zn(2+). The span at 583-592 shows a compositional bias: acidic residues; sequence EDDVAEEEED. Disordered regions lie at residues 583 to 621 and 802 to 827; these read EDDV…KEEE and DREE…KEEE. A compositionally biased stretch (basic and acidic residues) spans 606–621; the sequence is GEVKDETAEEVKKEEE.

The protein belongs to the metallo-beta-lactamase superfamily. RNA-metabolizing metallo-beta-lactamase-like family. CPSF2/YSH1 subfamily.

It localises to the nucleus. Its function is as follows. Component of the cleavage factor I (CF I) involved in pre-mRNA 3'-end processing. This chain is Endoribonuclease YSH1 (YSH1), found in Yarrowia lipolytica (strain CLIB 122 / E 150) (Yeast).